We begin with the raw amino-acid sequence, 88 residues long: Platelet factor 4 (88 aa).

An O-linked (GalNAc...) threonine glycan is attached at T7. 2 disulfide bridges follow: C25–C51 and C27–C67. S41 carries the phosphoserine modification. 76–82 (KKILKKL) contacts heparin.

It belongs to the intercrine alpha (chemokine CxC) family. In terms of assembly, homotetramer. Interacts with TNFAIP6 (via Link domain). Interacts with CCR1. Interacts with CXCR3. Interacts with THBD; this interaction enhances generation of activated protein C. O-linked glycan consists of Gal-GalNAc disaccharide which is modified with sialic acid residues (microheterogeneity).

It localises to the secreted. Functionally, chemokine released during platelet aggregation that plays a role in different biological processes including hematopoiesis, cell proliferation, differentiation, and activation. Acts via different functional receptors including CCR1, CXCR3A or CXCR3B. Upon interaction with CXCR3A receptor, induces activated T-lymphocytes migration mediated via downstream Ras/extracellular signal-regulated kinase (ERK) signaling. Neutralizes the anticoagulant effect of heparin by binding more strongly to heparin than to the chondroitin-4-sulfate chains of the carrier molecule. Plays a role in the inhibition of hematopoiesis and in the maintenance of hematopoietic stem cell (HSC) quiescence. Chemotactic for neutrophils and monocytes via CCR1. Inhibits endothelial cell proliferation. In cooperation with toll-like receptor 8/TLR8, induces chromatin remodeling and activates inflammatory gene expression via the TBK1-IRF5 axis. In addition, induces myofibroblast differentiation and collagen synthesis in different precursor cells, including endothelial cells, by stimulating endothelial-to-mesenchymal transition. Interacts with thrombomodulin/THBD to enhance the activation of protein C and thus potentiates its anticoagulant activity. In Bos taurus (Bovine), this protein is Platelet factor 4 (PF4).